A 724-amino-acid chain; its full sequence is Methionine--tRNA ligase (724 aa).

The 'HIGH' region motif lies at 12 to 22; that stretch reads PYVNNIPHLGN. Positions 143, 146, 155, and 158 each coordinate Zn(2+). Positions 330–334 match the 'KMSKS' region motif; sequence KFSKS. Lys-333 contributes to the ATP binding site. Residues 560–665 form the tRNA-binding domain; sequence FREKVLLRVV…KNPIAGERII (106 aa).

Belongs to the class-I aminoacyl-tRNA synthetase family. MetG type 1 subfamily. In terms of assembly, homodimer. Requires Zn(2+) as cofactor.

Its subcellular location is the cytoplasm. The enzyme catalyses tRNA(Met) + L-methionine + ATP = L-methionyl-tRNA(Met) + AMP + diphosphate. Its function is as follows. Is required not only for elongation of protein synthesis but also for the initiation of all mRNA translation through initiator tRNA(fMet) aminoacylation. This Borreliella afzelii (strain PKo) (Borrelia afzelii) protein is Methionine--tRNA ligase.